The following is a 949-amino-acid chain: ATPase 5, plasma membrane-type (949 aa).

Position 2 is an N-acetylserine (S2). Residues 2–61 (SELDHIKNESVDLVRIPMEEVFEELKCTKQGLTANEASHRLDVFGPNKLEEKKESKLLKF) are Cytoplasmic-facing. Residues 62–81 (LGFMWNPLSWVMEVAALMAI) traverse the membrane as a helical segment. At 82–93 (ALANGGGRPPDW) the chain is on the extracellular side. The helical transmembrane segment at 94-114 (QDFVGIVCLLLINSTISFIEE) threads the bilayer. The Cytoplasmic portion of the chain corresponds to 115–243 (NNAGNAAAAL…GHFQKVLTSI (129 aa)). A helical transmembrane segment spans residues 244-264 (GNFCICSIALGIIVELLVMYP). Residues 265–273 (IQRRRYRDG) lie on the Extracellular side of the membrane. The helical transmembrane segment at 274–291 (IDNLLVLLIGGIPIAMPS) threads the bilayer. Residues 292 to 643 (VLSVTMATGS…TSRAIFQRMK (352 aa)) are Cytoplasmic-facing. The active-site 4-aspartylphosphate intermediate is D329. 2 residues coordinate Mg(2+): D588 and D592. The helical transmembrane segment at 644–665 (NYTIYAVSITIRIVFGFMFIAL) threads the bilayer. Residues 666 to 670 (IWQFD) lie on the Extracellular side of the membrane. The helical transmembrane segment at 671–693 (FSPFMVLIIAILNDGTIMTISKD) threads the bilayer. At 694 to 709 (RMKPSPQPDSWKLRDI) the chain is on the cytoplasmic side. Residues 710-730 (FSTGVVLGGYQALMTVVFFWV) form a helical membrane-spanning segment. Topologically, residues 731-751 (MKDSDFFSNYFGVRPLSQRPE) are extracellular. A helical membrane pass occupies residues 752 to 772 (QMMAALYLQVSIISQALIFVT). At 773 to 784 (RSRSWSYAECPG) the chain is on the cytoplasmic side. A helical membrane pass occupies residues 785–805 (LLLLGAFVIAQLVATFIAVYA). Residues 806–813 (NWSFARIE) lie on the Extracellular side of the membrane. The helical transmembrane segment at 814 to 834 (GAGWGWAGVIWLYSFLTYIPL) threads the bilayer. The Cytoplasmic portion of the chain corresponds to 835-949 (DLLKFGIRYV…IDTIQQHYTV (115 aa)). T881 carries the post-translational modification Phosphothreonine. Phosphoserine occurs at positions 899 and 931. Residues 947–949 (YTV) form an interaction with 14-3-3 proteins region. T948 is subject to Phosphothreonine.

It belongs to the cation transport ATPase (P-type) (TC 3.A.3) family. Type IIIA subfamily. As to quaternary structure, binds to 14-3-3 proteins. The binding is induced by phosphorylation of Thr-948. Binding to 14-3-3 proteins activates the H(+)-ATPase. In terms of tissue distribution, expressed in guard cells and leaves.

Its subcellular location is the membrane. It catalyses the reaction ATP + H2O + H(+)(in) = ADP + phosphate + 2 H(+)(out). The plasma membrane H(+) ATPase of plants and fungi generates a proton gradient that drives the active transport of nutrients by H(+)-symport. The resulting external acidification and/or internal alkinization may mediate growth responses. In Arabidopsis thaliana (Mouse-ear cress), this protein is ATPase 5, plasma membrane-type (AHA5).